Reading from the N-terminus, the 420-residue chain is Diaminopimelate decarboxylase (420 aa).

Lys65 bears the N6-(pyridoxal phosphate)lysine mark. Residues Gly244 and 279–282 each bind pyridoxal 5'-phosphate; that span reads EPGR. Arg282, Arg318, and Tyr322 together coordinate substrate. Cys348 functions as the Proton donor in the catalytic mechanism. Residues Glu349 and Tyr377 each contribute to the substrate site. Position 377 (Tyr377) interacts with pyridoxal 5'-phosphate.

Belongs to the Orn/Lys/Arg decarboxylase class-II family. LysA subfamily. Homodimer. Requires pyridoxal 5'-phosphate as cofactor.

It catalyses the reaction meso-2,6-diaminopimelate + H(+) = L-lysine + CO2. The protein operates within amino-acid biosynthesis; L-lysine biosynthesis via DAP pathway; L-lysine from DL-2,6-diaminopimelate: step 1/1. Functionally, specifically catalyzes the decarboxylation of meso-diaminopimelate (meso-DAP) to L-lysine. This is Diaminopimelate decarboxylase (lysA) from Aquifex aeolicus (strain VF5).